Here is a 122-residue protein sequence, read N- to C-terminus: Large ribosomal subunit protein uL14c (122 aa).

It belongs to the universal ribosomal protein uL14 family. As to quaternary structure, part of the 50S ribosomal subunit.

It localises to the plastid. The protein resides in the chloroplast. In terms of biological role, binds to 23S rRNA. This Buxus microphylla (Littleleaf boxwood) protein is Large ribosomal subunit protein uL14c.